The primary structure comprises 256 residues: Transcription factor BHLH094 (256 aa).

The segment at 1–125 is disordered; the sequence is MDPAPSLAAE…TPPEPPKQDY (125 aa). A compositionally biased stretch (basic and acidic residues) spans 79–97; that stretch reads PEAKRLKPMKSSDKNDSLR. The basic motif; degenerate stretch occupies residues 134-147; the sequence is QATDSHSLAERARR. A bHLH domain is found at 134–184; the sequence is QATDSHSLAERARREKISERMKILQDLVPGCNKVIGKASVLDEIINYIQSL. Residues 148–184 form a helix-loop-helix motif region; the sequence is EKISERMKILQDLVPGCNKVIGKASVLDEIINYIQSL.

The protein belongs to the bHLH protein family. As to quaternary structure, interacts with RSS3. Forms a ternary complex with RSS3 and TIFY11A/JAZ9 in the nucleus.

Its subcellular location is the nucleus. Functionally, transcription factor that forms a ternary complex with RSS3 and TIFY11A/JAZ9 to negatively regulate jasmonate-responsive genes. This chain is Transcription factor BHLH094, found in Oryza sativa subsp. japonica (Rice).